Here is a 567-residue protein sequence, read N- to C-terminus: Oxygen-dependent choline dehydrogenase (567 aa).

6 to 35 contacts FAD; that stretch reads DYIIVGAGSAGNTLATRLTEDEGVTVLLLE. The Proton acceptor role is filled by histidine 475.

Belongs to the GMC oxidoreductase family. The cofactor is FAD.

The enzyme catalyses choline + A = betaine aldehyde + AH2. It catalyses the reaction betaine aldehyde + NAD(+) + H2O = glycine betaine + NADH + 2 H(+). Its pathway is amine and polyamine biosynthesis; betaine biosynthesis via choline pathway; betaine aldehyde from choline (cytochrome c reductase route): step 1/1. Functionally, involved in the biosynthesis of the osmoprotectant glycine betaine. Catalyzes the oxidation of choline to betaine aldehyde and betaine aldehyde to glycine betaine at the same rate. The sequence is that of Oxygen-dependent choline dehydrogenase from Pseudomonas fluorescens (strain SBW25).